Here is a 508-residue protein sequence, read N- to C-terminus: Histidine ammonia-lyase (508 aa).

Positions 141 to 143 form a cross-link, 5-imidazolinone (Ala-Gly); that stretch reads ASG. 2,3-didehydroalanine (Ser) is present on Ser142.

This sequence belongs to the PAL/histidase family. Post-translationally, contains an active site 4-methylidene-imidazol-5-one (MIO), which is formed autocatalytically by cyclization and dehydration of residues Ala-Ser-Gly.

The protein resides in the cytoplasm. The enzyme catalyses L-histidine = trans-urocanate + NH4(+). It functions in the pathway amino-acid degradation; L-histidine degradation into L-glutamate; N-formimidoyl-L-glutamate from L-histidine: step 1/3. This is Histidine ammonia-lyase (hutH) from Bacillus subtilis (strain 168).